A 294-amino-acid chain; its full sequence is 4-hydroxy-tetrahydrodipicolinate synthase (294 aa).

Threonine 45 provides a ligand contact to pyruvate. The active-site Proton donor/acceptor is the tyrosine 133. Catalysis depends on lysine 161, which acts as the Schiff-base intermediate with substrate. Residue isoleucine 203 participates in pyruvate binding.

The protein belongs to the DapA family. In terms of assembly, homotetramer; dimer of dimers.

It is found in the cytoplasm. The enzyme catalyses L-aspartate 4-semialdehyde + pyruvate = (2S,4S)-4-hydroxy-2,3,4,5-tetrahydrodipicolinate + H2O + H(+). It functions in the pathway amino-acid biosynthesis; L-lysine biosynthesis via DAP pathway; (S)-tetrahydrodipicolinate from L-aspartate: step 3/4. Its function is as follows. Catalyzes the condensation of (S)-aspartate-beta-semialdehyde [(S)-ASA] and pyruvate to 4-hydroxy-tetrahydrodipicolinate (HTPA). The protein is 4-hydroxy-tetrahydrodipicolinate synthase of Shewanella sp. (strain MR-4).